Consider the following 510-residue polypeptide: 2-isopropylmalate synthase (510 aa).

A Pyruvate carboxyltransferase domain is found at 5 to 267; it reads LIIFDTTLRD…DTRIDSVHIV (263 aa). Residues aspartate 14, histidine 202, histidine 204, and asparagine 238 each coordinate Mn(2+). The regulatory domain stretch occupies residues 392–510; the sequence is KLLSLTAHSE…SKLERAHPQV (119 aa).

Belongs to the alpha-IPM synthase/homocitrate synthase family. LeuA type 1 subfamily. Homodimer. The cofactor is Mn(2+).

It is found in the cytoplasm. It catalyses the reaction 3-methyl-2-oxobutanoate + acetyl-CoA + H2O = (2S)-2-isopropylmalate + CoA + H(+). Its pathway is amino-acid biosynthesis; L-leucine biosynthesis; L-leucine from 3-methyl-2-oxobutanoate: step 1/4. Its function is as follows. Catalyzes the condensation of the acetyl group of acetyl-CoA with 3-methyl-2-oxobutanoate (2-ketoisovalerate) to form 3-carboxy-3-hydroxy-4-methylpentanoate (2-isopropylmalate). The chain is 2-isopropylmalate synthase from Nitrosospira multiformis (strain ATCC 25196 / NCIMB 11849 / C 71).